The following is a 355-amino-acid chain: Membrane cofactor protein (355 aa).

The signal sequence occupies residues 1–42; it reads MTAAPLTPDPTHPRRRRKSYTFFSLGIYAEALLFLLSSLSDA. Sushi domains follow at residues 43–104, 105–168, 169–234, and 235–294; these read CEPP…GCIK, VQCT…SCKK, VYCL…ECKV, and VKCP…QCLK. Topologically, residues 43-326 are extracellular; it reads CEPPPPFEAM…GIFGQEFDAW (284 aa). 6 disulfides stabilise this stretch: C107–C149, C135–C166, C171–C219, C200–C232, C237–C279, and C265–C292. An N-linked (GlcNAc...) asparagine glycan is attached at N179. The O-linked (GalNAc...) threonine glycan is linked to T301. The helical transmembrane segment at 327-347 threads the bilayer; sequence IIALIVVTSVVGVIVICLIIL. The Cytoplasmic portion of the chain corresponds to 348-355; that stretch reads RCSEYRKK.

Interacts with C3b. Interacts with C4b. Interacts with moesin/MSN. In terms of processing, O-glycosylated. Post-translationally, N-glycosylated. As to expression, specifically expressed in testis. Within testis, present only in elongated spermatids and spermatozoa (at protein level).

It is found in the cytoplasmic vesicle. The protein localises to the secretory vesicle. The protein resides in the acrosome inner membrane. Functionally, may be involved in the fusion of the spermatozoa with the oocyte during fertilization. The sequence is that of Membrane cofactor protein (Cd46) from Rattus norvegicus (Rat).